Here is a 1169-residue protein sequence, read N- to C-terminus: Rabankyrin-5 (1169 aa).

Position 2 is an N-acetylalanine (alanine 2). Positions 68–130 constitute a BTB domain; it reads SDLKIKVGDR…IYTDELEFRE (63 aa). 5 ANK repeats span residues 217–247, 255–284, 288–317, 322–362, and 366–396; these read KTEYPLHKAIKVEREDVVFLYLIEMDSQLPG, NGDLALDLALSRRLESIATTLVSHKADVDM, NGWSLLHKGIQRGDLFASTFLIKNGALVNA, AQET…NPNM, and KGRTPLHLSIMARNDCVFSQLLQCKQLDLEL. Serine 270 is subject to Phosphoserine. Residues 421 to 423 carry the NPF motif; that stretch reads NPF. ANK repeat units lie at residues 490–519, 542–572, 588–617, 621–650, 654–683, 687–716, 724–753, 769–798, 802–832, 836–865, 870–899, 905–934, 938–967, 971–1001, 1005–1037, and 1043–1072; these read WGETPLHTACRHGLANLTAELLQQGANPNL, YLQTPLHMAIAYNHPDVVSVILEQKANALHA, RDQTVLGLALWTGMHTIAAQLLGSGASIND, DGQTLLHMAIQRQDSKSALFLLEHQADINV, DGETALQLAIKHQLPLVVDAICTRGADMSV, KGNPPLWLALASNLEDIASTLVRHGCDATC, CLQTLLHRAVDENNESTACFLIRSGCDVNS, DGQTPLHLAASWGLEETVQCLLEFGANVNA, EGRTPVHVAISNQHSVIIQLLISHPNIELSV, QGLTPFACAMTYKNNKAAEAILKRESGAAE, KGRNFLHVAVQNSDIESVLFLISVQANVNS, SKLTPLHLAVQAGSEIIVRNLLLAGAKVNE, HRQTALHLAAQQDLPTICSVLLENGVDFAA, NGNNALHLAVMHGRLNNIRALLTECTVDAEA, RGQSPLHILGQYGKENAAAIFDLFLECMPEYPL, and EGNTVLLLAYMKGNANLCRAIVRSGVRLGV. The interaction with RHOD and RAB5A stretch occupies residues 650 to 759; that stretch reads VRTQDGETAL…DVNSPRQPGT (110 aa). Residues 1104–1164 form an FYVE-type zinc finger; the sequence is WCDGSNCYEC…VCNICFDVLT (61 aa). Residues cysteine 1110, cysteine 1113, cysteine 1126, cysteine 1129, cysteine 1134, cysteine 1137, cysteine 1156, and cysteine 1159 each contribute to the Zn(2+) site.

Interacts with RAB5A (in GTP-bound form). Interacts with RHOD (independent of GTP-loaded status). Interacts with EHD1. Interacts with VPS26A; the interaction is independent of EHD1 and is indicative for an association with the cargo recognition subcomplex of the retromer complex. As to expression, expressed in kidney proximal tubule epithelial cells; at protein level.

It localises to the cytoplasm. The protein resides in the endosome membrane. The protein localises to the cytoplasmic vesicle. Functionally, proposed effector of Rab5. Binds to phosphatidylinositol 3-phosphate (PI(3)P). Involved in homotypic early endosome fusion and to a lesser extent in heterotypic fusion of chlathrin-coated vesicles with early endosomes. Required for correct endosomal localization. Involved in the internalization and trafficking of activated tyrosine kinase receptors such as PDGFRB. Regulates the subcellular localization of the retromer complex in a EHD1-dependent manner. Involved in endosome-to-Golgi transport and biosynthetic transport to late endosomes and lysosomes indicative for a regulation of retromer complex-mediated retrograde transport. Involved in macropinocytosis; the function is dependent on Rab5-GTP. The protein is Rabankyrin-5 (Ankfy1) of Mus musculus (Mouse).